A 1559-amino-acid chain; its full sequence is Bile pigment transporter 1 (1559 aa).

The Vacuolar portion of the chain corresponds to 1–29 (MSSLEVVDGCPYGYRPYPDSGTNALNPCF). The helical transmembrane segment at 30-50 (ISVISAWQAVFFLLIGSYQLW) threads the bilayer. Topologically, residues 51–84 (KLYKNNKVPPRFKNFPTLPSKINSRHLTHLTNVC) are cytoplasmic. The helical transmembrane segment at 85–105 (FQSTLIICELALVSQSSDRVY) threads the bilayer. At 106-110 (PFILK) the chain is on the vacuolar side. Residues 111 to 127 (KALYLNLLFNLGISLPT) form a helical membrane-spanning segment. Over 128 to 139 (QYLAYFKSTFSM) the chain is Cytoplasmic. The chain crosses the membrane as a helical span at residues 140–160 (GNQLFYYMFQILLQLFLILQR). Topologically, residues 161 to 178 (YYHGSSNERLTVISGQTA) are vacuolar. The chain crosses the membrane as a helical span at residues 179-199 (MILEVLLLFNSVAIFIYDLCI). Topologically, residues 200–283 (FEPINELSEY…WLNRNSLWRA (84 aa)) are cytoplasmic. The chain crosses the membrane as a helical span at residues 284–304 (IWKSFGRTISVAMLYETTSDL). An ABC transmembrane type-1 1 domain is found at 292-578 (ISVAMLYETT…VPSMINTIIE (287 aa)). Residues 305–333 (LSVVQPQFLRIFIDGLNPETSSKYPPLNG) are Vacuolar-facing. Residues 334-354 (VFIALTLFVISVVSVFLTNQF) form a helical membrane-spanning segment. The Cytoplasmic portion of the chain corresponds to 355–410 (YIGIFEAGLGIRGSLASLVYQKSLRLTLAERNEKSTGDILNLMSVDVLRIQRFFEN). A helical membrane pass occupies residues 411–431 (AQTIIGAPIQIIVVLTSLYWL). At 432 to 434 (LGK) the chain is on the vacuolar side. A helical membrane pass occupies residues 435–455 (AVIGGLVTMAIMMPINAFLSR). Over 456–518 (KVKKLSKTQM…NFRKIGIVSN (63 aa)) the chain is Cytoplasmic. A helical membrane pass occupies residues 519–539 (LIYFAWNCVPLMVTCSTFGLF). Residues 540–560 (SLFSDSPLSPAIVFPSLSLFN) lie on the Vacuolar side of the membrane. The helical transmembrane segment at 561 to 581 (ILNSAIYSVPSMINTIIETSV) threads the bilayer. Residues 582-972 (SMERLKSFLL…VKTKIYLAYI (391 aa)) lie on the Cytoplasmic side of the membrane. The 233-residue stretch at 639-871 (LRTDEESIIG…KNNTSKLKKL (233 aa)) folds into the ABC transporter 1 domain. A Phosphoserine modification is found at Ser645. 672–679 (GRVGAGKS) provides a ligand contact to ATP. Residues 877-899 (SPIDNGNESDVQTEHRSESEVDE) form a disordered region. Ser885 bears the Phosphoserine mark. Thr889 carries the post-translational modification Phosphothreonine. Ser893 and Ser895 each carry phosphoserine. At Thr916 the chain carries Phosphothreonine. A phosphoserine mark is found at Ser927 and Ser931. Thr934 carries the post-translational modification Phosphothreonine. A helical transmembrane segment spans residues 973 to 993 (KACGVLGVVLFFLFMILTRVF). The 286-residue stretch at 980-1265 (VVLFFLFMIL…IVRTTVTIET (286 aa)) folds into the ABC transmembrane type-1 2 domain. Residues 994–1030 (DLAENFWLKYWSESNEKNGSNERVWMFVGVYSLIGVA) are Vacuolar-facing. The N-linked (GlcNAc...) asparagine glycan is linked to Asn1011. The helical transmembrane segment at 1031–1052 (SAAFNNLRSIMMLLYCSIRGSK) threads the bilayer. The Cytoplasmic portion of the chain corresponds to 1053 to 1095 (KLHESMAKSVIRSPMTFFETTPVGRIINRFSSDMDAVDSNLQY). A helical membrane pass occupies residues 1096–1116 (IFSFFFKSILTYLVTVILVGY). Position 1117 (Asn1117) is a topological domain, vacuolar. A helical membrane pass occupies residues 1118 to 1138 (MPWFLVFNMFLVVIYIYYQTF). Topologically, residues 1139 to 1209 (YIVLSRELKR…STNRWLSVRL (71 aa)) are cytoplasmic. The helical transmembrane segment at 1210 to 1230 (QTIGATIVLATAILALATMNT) threads the bilayer. At 1231-1235 (KRQLS) the chain is on the vacuolar side. Residues 1236-1256 (SGMVGLLMSYSLEVTGSLTWI) form a helical membrane-spanning segment. The Cytoplasmic portion of the chain corresponds to 1257-1559 (VRTTVTIETN…SLCEKGGYLK (303 aa)). In terms of domain architecture, ABC transporter 2 spans 1302–1553 (IEFKNYSTKY…KTSIFYSLCE (252 aa)). 1336–1343 (GRTGAGKS) contacts ATP. The segment covering 1420–1433 (HLEKMLHSKPRGDD) has biased composition (basic and acidic residues). The segment at 1420 to 1439 (HLEKMLHSKPRGDDSNEEDG) is disordered.

This sequence belongs to the ABC transporter superfamily.

Its subcellular location is the vacuole membrane. Functionally, cooperates for the ATP-dependent vacuolar transport of bilirubin and glutathione conjugates. This Saccharomyces cerevisiae (strain ATCC 204508 / S288c) (Baker's yeast) protein is Bile pigment transporter 1 (BPT1).